The sequence spans 311 residues: Malate dehydrogenase (311 aa).

NAD(+) is bound by residues 7-13 (GAAGGIG) and Asp34. Substrate-binding residues include Arg81 and Arg87. NAD(+)-binding positions include Asn94 and 117 to 119 (ITN). Positions 119 and 153 each coordinate substrate. Residue His177 is the Proton acceptor of the active site. Residue Met227 participates in NAD(+) binding.

This sequence belongs to the LDH/MDH superfamily. MDH type 1 family. In terms of assembly, homodimer.

It catalyses the reaction (S)-malate + NAD(+) = oxaloacetate + NADH + H(+). Functionally, catalyzes the reversible oxidation of malate to oxaloacetate. The polypeptide is Malate dehydrogenase (Yersinia enterocolitica serotype O:8 / biotype 1B (strain NCTC 13174 / 8081)).